A 179-amino-acid polypeptide reads, in one-letter code: Putative cleavage and polyadenylation specificity factor subunit 4-like protein (179 aa).

5 C3H1-type zinc fingers span residues 35–61 (KSAS…RHDR), 62–89 (GEKM…HQYD), 90–117 (LTRM…HVKP), 118–145 (AFKS…HVPR), and 146–169 (IMCL…QKIR).

This sequence belongs to the CPSF4/YTH1 family.

The protein is Putative cleavage and polyadenylation specificity factor subunit 4-like protein (CPSF4L) of Homo sapiens (Human).